Consider the following 205-residue polypeptide: Outer-membrane lipoprotein LolB (205 aa).

The signal sequence occupies residues 1 to 17 (MFLRHCITFTMIALLAG). A lipid anchor (N-palmitoyl cysteine) is attached at Cys-18. Cys-18 carries the S-diacylglycerol cysteine lipid modification.

This sequence belongs to the LolB family. As to quaternary structure, monomer.

The protein localises to the cell outer membrane. Its function is as follows. Plays a critical role in the incorporation of lipoproteins in the outer membrane after they are released by the LolA protein. This is Outer-membrane lipoprotein LolB from Pseudomonas putida (strain ATCC 700007 / DSM 6899 / JCM 31910 / BCRC 17059 / LMG 24140 / F1).